Consider the following 442-residue polypeptide: Probable glycine dehydrogenase (decarboxylating) subunit 1 (442 aa).

It belongs to the GcvP family. N-terminal subunit subfamily. The glycine cleavage system is composed of four proteins: P, T, L and H. In this organism, the P 'protein' is a heterodimer of two subunits.

It catalyses the reaction N(6)-[(R)-lipoyl]-L-lysyl-[glycine-cleavage complex H protein] + glycine + H(+) = N(6)-[(R)-S(8)-aminomethyldihydrolipoyl]-L-lysyl-[glycine-cleavage complex H protein] + CO2. In terms of biological role, the glycine cleavage system catalyzes the degradation of glycine. The P protein binds the alpha-amino group of glycine through its pyridoxal phosphate cofactor; CO(2) is released and the remaining methylamine moiety is then transferred to the lipoamide cofactor of the H protein. The protein is Probable glycine dehydrogenase (decarboxylating) subunit 1 of Geotalea uraniireducens (strain Rf4) (Geobacter uraniireducens).